Here is a 162-residue protein sequence, read N- to C-terminus: Protein archease (162 aa).

Residues Asp34, Asp161, and Ile162 each contribute to the Ca(2+) site.

Belongs to the archease family. As to quaternary structure, component of the tRNA-splicing ligase complex.

Component of the tRNA-splicing ligase complex required to facilitate the enzymatic turnover of catalytic subunit RTCB. Together with ddx1, acts by facilitating the guanylylation of RTCB, a key intermediate step in tRNA ligation. This chain is Protein archease, found in Ictalurus punctatus (Channel catfish).